The chain runs to 268 residues: MPVVSLAELLESGVHFGHQTRRWNPKMSPYIYTARNGVHIIDLVQTAQLMENAYEYVRKSSEQGKRFLFIGTKRQAAGIIAQEASRCGANYVNQRWLGGMLTNWETIKGRVERLKELESMEENGAISRRPKKEAAVLRRELGKLDKYLGGIKTMRKLPDVVVIVDQRREYNAISECQKLGIPIISMLDTNCDPDFADIPIPANDDAIRSIKLILGKLADAIYEGRHGQLDSEQDYEDFDESISDEYDDYEDEEEYEEQDLEVDASEDE.

The disordered stretch occupies residues 228-268; the sequence is QLDSEQDYEDFDESISDEYDDYEDEEEYEEQDLEVDASEDE. The segment covering 231 to 268 has biased composition (acidic residues); the sequence is SEQDYEDFDESISDEYDDYEDEEEYEEQDLEVDASEDE.

It belongs to the universal ribosomal protein uS2 family.

This chain is Small ribosomal subunit protein uS2, found in Rippkaea orientalis (strain PCC 8801 / RF-1) (Cyanothece sp. (strain PCC 8801)).